Reading from the N-terminus, the 137-residue chain is Immunoglobulin domain-containing protein oig-1 (137 aa).

Residues 1–23 form the signal peptide; that stretch reads MFSELRILRDILLLCFLSVGINA. Positions 41–133 constitute an Ig-like C2-type domain; it reads PKISRSSYFK…KGSRVKKFLT (93 aa). A disulfide bridge connects residues Cys-63 and Cys-118.

Expressed in DD and VD GABAergic motor neurons. Expressed in a subset of head neurons including M2 motor neurons in the pharynx. Expressed in coelomocytes.

Its subcellular location is the membrane. The protein resides in the secreted. It localises to the extracellular space. It is found in the cell projection. The protein localises to the dendrite. Its subcellular location is the axon. Its function is as follows. Plays a role in neural development, where it temporally regulates synapse formation in the D-type inhibitory GABAergic motor neurons, dorsal D (DD) and ventral D (VD) motor neurons. Controls the translocation of postsynaptic proteins, such as the acetylcholine receptor subunit acr-12, and presynaptic proteins, such as snb-1, along nerve cords to prevent premature synapse remodeling/formation. The polypeptide is Immunoglobulin domain-containing protein oig-1 (Caenorhabditis elegans).